The following is a 277-amino-acid chain: MGIKVYKPTTNGRRNMTSLDFAEITTSTPEKSLLVSLKNKAGRNNNGRITVRHQGGGHKRHYRLIDFKRNKDGVEAVVKTIEYDPNRTANIALVHYTDGVKAYIIAPKGLEVGQRIVSGPDADIKVGNALPLANIPVGTVIHNIELKPGKGAELVRAAGASAQVLGQEGKYVLVRLQSGEVRMILGTCRATIGTVGNEQQSLINLGKAGRNRWKGVRPTVRGSVMNPNDHPHGGGEGKAPVGRKAPSTPWGKPALGLKTRNKKAKSDKLIVRRRNEK.

The interval 222–277 (GSVMNPNDHPHGGGEGKAPVGRKAPSTPWGKPALGLKTRNKKAKSDKLIVRRRNEK) is disordered. The span at 264 to 277 (AKSDKLIVRRRNEK) shows a compositional bias: basic and acidic residues.

This sequence belongs to the universal ribosomal protein uL2 family. As to quaternary structure, part of the 50S ribosomal subunit. Forms a bridge to the 30S subunit in the 70S ribosome.

Its function is as follows. One of the primary rRNA binding proteins. Required for association of the 30S and 50S subunits to form the 70S ribosome, for tRNA binding and peptide bond formation. It has been suggested to have peptidyltransferase activity; this is somewhat controversial. Makes several contacts with the 16S rRNA in the 70S ribosome. The polypeptide is Large ribosomal subunit protein uL2 (Streptococcus thermophilus (strain CNRZ 1066)).